We begin with the raw amino-acid sequence, 377 residues long: uncharacterized protein (377 aa).

The next 10 membrane-spanning stretches (helical) occupy residues 4–24, 41–61, 85–105, 134–154, 159–179, 192–212, 278–298, 301–321, 327–347, and 356–376; these read LLTP…LLGT, ASFG…FPIT, IAAL…FLFG, FHAM…IATV, VYVH…PFLL, GAVG…IALA, VFGI…AGFV, GVGY…DLVV, IASV…AIGL, and LCFF…PVLK.

This sequence to R.meliloti MosC.

The protein localises to the cell membrane. Could be involved in a transport system. This is an uncharacterized protein from Sinorhizobium fredii (strain NBRC 101917 / NGR234).